Consider the following 894-residue polypeptide: Microsomal triglyceride transfer protein large subunit (894 aa).

A signal peptide spans 1–21; it reads MILLAVLFLCFFSSYSASVKG. The 631-residue stretch at 28–658 folds into the Vitellogenin domain; that stretch reads LNNERLYKLT…IFQYIGKAEL (631 aa). A disulfide bridge connects residues Cys174 and Cys194.

In terms of assembly, interacts with PRAP1. Heterodimer; heterodimerizes with the protein disulfide isomerase (P4HB/PDI). Interacts with APOB. As to quaternary structure, heterodimer; heterodimerizes with the protein disulfide isomerase (P4HB/PDI). Post-translationally, cleaved by signal peptidase between residues Gln-33 and Asn-34. Mainly expressed in the intestine and the liver, and at lower levels in white and brown fat cells. Expressed in heart. In terms of tissue distribution, ubiquitous, and is the major isoform in hematopoietic cells and adipocytes.

The protein resides in the endoplasmic reticulum. Its subcellular location is the golgi apparatus. The enzyme catalyses a 1,2-diacyl-sn-glycero-3-phosphocholine(in) = a 1,2-diacyl-sn-glycero-3-phosphocholine(out). It catalyses the reaction a 1,2-diacyl-sn-glycero-3-phosphoethanolamine(in) = a 1,2-diacyl-sn-glycero-3-phosphoethanolamine(out). It carries out the reaction a cholesterol ester(in) = a cholesterol ester(out). The catalysed reaction is a triacyl-sn-glycerol(in) = a triacyl-sn-glycerol(out). Its function is as follows. Catalyzes the transport of triglyceride, cholesteryl ester, and phospholipid between phospholipid surfaces. Required for the assembly and secretion of plasma lipoproteins that contain apolipoprotein B. May be involved in regulating cholesteryl ester biosynthesis in cells that produce lipoproteins. In terms of biological role, critical for the development of natural killer T (NKT) cells. Required for the assembly and secretion of plasma lipoproteins that contain apolipoprotein B. In Mus musculus (Mouse), this protein is Microsomal triglyceride transfer protein large subunit (Mttp).